The primary structure comprises 632 residues: Nucleoside triphosphatase I (632 aa).

Residues 42–204 (FLGLDKMHSL…IMLVNLLRPK (163 aa)) form the Helicase ATP-binding domain. Residue 55–62 (HETGVGKT) coordinates ATP. Positions 141–144 (DECH) match the DEXH box motif. Residues 367 to 532 (KFTDVCLRIL…EFTQLFKVFK (166 aa)) form the Helicase C-terminal domain. The binding to the cap-specific mRNA (nucleoside-2'-O-)-methyltransferase stretch occupies residues 457–524 (DIFILDMTWN…DIIRNKSKEF (68 aa)).

The protein belongs to the helicase family. NPH I subfamily. As to quaternary structure, monomer. Interacts (via C-terminus) with RAP94 (via N-terminus). Interacts with the cap-specific mRNA (nucleoside-2'-O-)-methyltransferase.

The protein localises to the virion. It catalyses the reaction a ribonucleoside 5'-triphosphate + H2O = a ribonucleoside 5'-diphosphate + phosphate + H(+). In terms of biological role, DNA-dependent ATPase required for providing the needed energy to achieve the termination of early transcripts. Acts in concert with the RAP94 subunit of the virion RNA polymerase and the capping enzyme/VTF to catalyze release of UUUUUNU-containing nascent RNA from the elongation complex. NPH-I must bind ssDNA in order to exhibit ATPase activity. In Rabbit fibroma virus (strain Kasza) (RFV), this protein is Nucleoside triphosphatase I (NPH1).